Here is a 144-residue protein sequence, read N- to C-terminus: D-aminoacyl-tRNA deacylase (144 aa).

The short motif at 136-137 (GP) is the Gly-cisPro motif, important for rejection of L-amino acids element.

The protein belongs to the DTD family. Homodimer.

It is found in the cytoplasm. It carries out the reaction glycyl-tRNA(Ala) + H2O = tRNA(Ala) + glycine + H(+). The catalysed reaction is a D-aminoacyl-tRNA + H2O = a tRNA + a D-alpha-amino acid + H(+). Its function is as follows. An aminoacyl-tRNA editing enzyme that deacylates mischarged D-aminoacyl-tRNAs. Also deacylates mischarged glycyl-tRNA(Ala), protecting cells against glycine mischarging by AlaRS. Acts via tRNA-based rather than protein-based catalysis; rejects L-amino acids rather than detecting D-amino acids in the active site. By recycling D-aminoacyl-tRNA to D-amino acids and free tRNA molecules, this enzyme counteracts the toxicity associated with the formation of D-aminoacyl-tRNA entities in vivo and helps enforce protein L-homochirality. This is D-aminoacyl-tRNA deacylase from Aliivibrio salmonicida (strain LFI1238) (Vibrio salmonicida (strain LFI1238)).